The following is a 169-amino-acid chain: Disulfide bond formation protein B 1 (169 aa).

Over 1–14 (MSDNTLYLRREKRF) the chain is Cytoplasmic. The chain crosses the membrane as a helical span at residues 15-31 (LVLLGIICLALIGGALY). The Periplasmic segment spans residues 32–49 (MQVVLDEAPCPLCILQRY). Cysteine 41 and cysteine 44 form a disulfide bridge. Residues 50 to 65 (ALLFIAIFAFIGAAMP) form a helical membrane-spanning segment. Residues 66-72 (GRRSVTA) are Cytoplasmic-facing. A helical transmembrane segment spans residues 73–89 (FETLVTLSALGGIAAAG). Residues 90–144 (RHVWILAHPSDSCGIDVLQPIVDGLPLATLFPTGFQVSGFCTTPYPPVLGLSLAQ) lie on the Periplasmic side of the membrane. The cysteines at positions 102 and 130 are disulfide-linked. The chain crosses the membrane as a helical span at residues 145 to 163 (WALTAFVLTAVLVPACIIR). The Cytoplasmic segment spans residues 164 to 169 (NRRKPY).

Belongs to the DsbB family.

The protein localises to the cell inner membrane. Its function is as follows. Required for disulfide bond formation in some periplasmic proteins. Acts by oxidizing the DsbA protein. The protein is Disulfide bond formation protein B 1 of Pseudomonas syringae pv. syringae (strain B728a).